The following is a 77-amino-acid chain: DNA-directed RNA polymerase subunit epsilon (77 aa).

It belongs to the RNA polymerase subunit epsilon family. As to quaternary structure, RNAP is composed of a core of 2 alpha, a beta and a beta' subunit. The core is associated with a delta subunit, and at least one of epsilon or omega. When a sigma factor is associated with the core the holoenzyme is formed, which can initiate transcription.

The enzyme catalyses RNA(n) + a ribonucleoside 5'-triphosphate = RNA(n+1) + diphosphate. Its function is as follows. A non-essential component of RNA polymerase (RNAP). This is DNA-directed RNA polymerase subunit epsilon from Streptococcus pneumoniae (strain P1031).